The following is a 385-amino-acid chain: Glutamate 5-kinase (385 aa).

Lysine 18 lines the ATP pocket. Residues serine 57, aspartate 144, and asparagine 156 each contribute to the substrate site. 218–224 contributes to the ATP binding site; that stretch reads TGGMKSK. Residues 283 to 361 form the PUA domain; the sequence is RGVLSIDAGA…SRIEQVLGHK (79 aa).

This sequence belongs to the glutamate 5-kinase family.

The protein resides in the cytoplasm. The catalysed reaction is L-glutamate + ATP = L-glutamyl 5-phosphate + ADP. Its pathway is amino-acid biosynthesis; L-proline biosynthesis; L-glutamate 5-semialdehyde from L-glutamate: step 1/2. In terms of biological role, catalyzes the transfer of a phosphate group to glutamate to form L-glutamate 5-phosphate. The sequence is that of Glutamate 5-kinase from Syntrophus aciditrophicus (strain SB).